The primary structure comprises 551 residues: MKANHIRILLLVTIAIMLISLMGRWEQTFPSNSSQSQTTQTQQDNSHYNSDTPATTNVSTSDAKASLTKTTSFSKYDDAKSVTINTDVFKNLKISLLDGAIISASLEDYSVSLDDKTPMALLTDEQGSEYIAKSTIVINKKPVDVNFESQGIKKENGKQVLTLTGSVDGLEITRTYTFDDAKYNISVSQNIKNTTSEPVSVIIDDSLARDFNPAGDSFSLLNAHSYTFTGVAYSTANDSFRKESFKDISKTNGQPTVINSQGLGWVAFIQHYFVSAWIPQSNDSKIYYKNLNNDVFEAGAYTGISIAPNQSESIDSVLYSGPIIKANLVDLAPNLEKTLDYGMLSFFSEIIFWVMNQIHSLVGNWGLAIILVTCLIKLIFYPLSAKSYRSMAKMRMLQPRVKRLQETYKDDRQVLGKKMMEMYKEEKVNPLSGCLPMLIQIPIFISLYWVLLESVELRQAPFIFWIHDLSMKDPYFVLPILMGISMFLQQKLSPAPADPMQAKIMMFLPVIFTFLFASFPSGLVLYWLTNNVISILQQWIITRHYQATHKK.

The helical transmembrane segment at 3-23 (ANHIRILLLVTIAIMLISLMG) threads the bilayer. Residues 30 to 43 (PSNSSQSQTTQTQQ) are compositionally biased toward low complexity. The disordered stretch occupies residues 30–61 (PSNSSQSQTTQTQQDNSHYNSDTPATTNVSTS). The span at 44-61 (DNSHYNSDTPATTNVSTS) shows a compositional bias: polar residues. 3 consecutive transmembrane segments (helical) span residues 361 to 381 (LVGN…LIFY), 431 to 451 (LSGC…YWVL), and 504 to 524 (IMMF…SGLV).

It belongs to the OXA1/ALB3/YidC family. Type 1 subfamily. In terms of assembly, interacts with the Sec translocase complex via SecD. Specifically interacts with transmembrane segments of nascent integral membrane proteins during membrane integration.

It is found in the cell inner membrane. Its function is as follows. Required for the insertion and/or proper folding and/or complex formation of integral membrane proteins into the membrane. Involved in integration of membrane proteins that insert both dependently and independently of the Sec translocase complex, as well as at least some lipoproteins. Aids folding of multispanning membrane proteins. The polypeptide is Membrane protein insertase YidC (Francisella philomiragia subsp. philomiragia (strain ATCC 25017 / CCUG 19701 / FSC 153 / O#319-036)).